Here is a 194-residue protein sequence, read N- to C-terminus: Thymidine kinase (194 aa).

ATP is bound by residues 9-16 (GAMNSGKT) and 85-88 (DECQ). The active-site Proton acceptor is the glutamate 86. Residues cysteine 143, cysteine 146, cysteine 180, and histidine 183 each contribute to the Zn(2+) site.

This sequence belongs to the thymidine kinase family. As to quaternary structure, homotetramer.

The protein localises to the cytoplasm. It carries out the reaction thymidine + ATP = dTMP + ADP + H(+). The sequence is that of Thymidine kinase from Enterococcus faecalis (strain ATCC 700802 / V583).